Here is a 544-residue protein sequence, read N- to C-terminus: 4-coumarate--CoA ligase 2 (544 aa).

Ser190, Ser191, Gly192, Thr193, Thr194, and Lys198 together coordinate ATP. Tyr240 contributes to the (E)-4-coumaroyl-AMP binding site. Lys261 lines the CoA pocket. Positions 263 to 332 (DIVPFLELIQ…AKFPNAKLGQ (70 aa)) are SBD1. Residues Ala310, Gln332, Gly333, Thr337, and Met345 each contribute to the (E)-4-coumaroyl-AMP site. Positions 332, 333, and 337 each coordinate ATP. The segment at 333–400 (GYGMTEAGPV…IRGDQIMKGY (68 aa)) is SBD2. ATP is bound by residues Asp421 and Arg436. Lys438 and Lys442 together coordinate (E)-4-coumaroyl-AMP. Positions 444 and 445 each coordinate CoA. ATP is bound at residue Lys527.

Belongs to the ATP-dependent AMP-binding enzyme family. The cofactor is Mg(2+).

The enzyme catalyses (E)-4-coumarate + ATP + CoA = (E)-4-coumaroyl-CoA + AMP + diphosphate. It carries out the reaction (E)-4-coumarate + ATP + H(+) = (E)-4-coumaroyl-AMP + diphosphate. The catalysed reaction is (E)-4-coumaroyl-AMP + CoA = (E)-4-coumaroyl-CoA + AMP + H(+). It functions in the pathway phytoalexin biosynthesis; 3,4',5-trihydroxystilbene biosynthesis; 3,4',5-trihydroxystilbene from trans-4-coumarate: step 1/2. Its function is as follows. Carboxylate--CoA ligase that may use 4-coumarate as substrate. Follows a two-step reaction mechanism, wherein the carboxylate substrate first undergoes adenylation by ATP, followed by a thioesterification in the presence of CoA to yield the final CoA thioester. This is 4-coumarate--CoA ligase 2 (4CL2) from Petroselinum crispum (Parsley).